A 196-amino-acid chain; its full sequence is Molybdenum cofactor guanylyltransferase (196 aa).

GTP contacts are provided by residues Leu-14 to Gly-16, Lys-27, Asp-73, and Asp-106. Residue Asp-106 participates in Mg(2+) binding.

This sequence belongs to the MobA family. As to quaternary structure, monomer. It depends on Mg(2+) as a cofactor.

The protein localises to the cytoplasm. The catalysed reaction is Mo-molybdopterin + GTP + H(+) = Mo-molybdopterin guanine dinucleotide + diphosphate. Functionally, transfers a GMP moiety from GTP to Mo-molybdopterin (Mo-MPT) cofactor (Moco or molybdenum cofactor) to form Mo-molybdopterin guanine dinucleotide (Mo-MGD) cofactor. The chain is Molybdenum cofactor guanylyltransferase from Acidiphilium cryptum (strain JF-5).